A 215-amino-acid polypeptide reads, in one-letter code: E3 ubiquitin-protein ligase znrf1 (215 aa).

Disordered regions lie at residues 1–39 and 66–96; these read MGGK…PGGT and YTPR…ETGG. Gly-2 is lipidated: N-myristoyl glycine. Residues 172–213 form an RING-type; atypical zinc finger; sequence CVICLEELQQGDTIARLPCLCIYHKSCIDSWFEINRSCPEHP.

Its subcellular location is the endosome. The protein resides in the lysosome. It is found in the membrane. It carries out the reaction S-ubiquitinyl-[E2 ubiquitin-conjugating enzyme]-L-cysteine + [acceptor protein]-L-lysine = [E2 ubiquitin-conjugating enzyme]-L-cysteine + N(6)-ubiquitinyl-[acceptor protein]-L-lysine.. It functions in the pathway protein modification; protein ubiquitination. Functionally, E3 ubiquitin-protein ligase that plays a role in neuron cells differentiation. Plays a role in the establishment and maintenance of neuronal transmission and plasticity. This Danio rerio (Zebrafish) protein is E3 ubiquitin-protein ligase znrf1 (znrf1).